The sequence spans 450 residues: Phosphoglucosamine mutase (450 aa).

Residue serine 101 is the Phosphoserine intermediate of the active site. Mg(2+) is bound by residues serine 101, aspartate 241, aspartate 243, and aspartate 245. At serine 101 the chain carries Phosphoserine.

The protein belongs to the phosphohexose mutase family. Mg(2+) serves as cofactor. Post-translationally, activated by phosphorylation.

It catalyses the reaction alpha-D-glucosamine 1-phosphate = D-glucosamine 6-phosphate. In terms of biological role, catalyzes the conversion of glucosamine-6-phosphate to glucosamine-1-phosphate. The chain is Phosphoglucosamine mutase from Ligilactobacillus salivarius (strain UCC118) (Lactobacillus salivarius).